We begin with the raw amino-acid sequence, 149 residues long: Large ribosomal subunit protein bL9 (149 aa).

This sequence belongs to the bacterial ribosomal protein bL9 family.

Binds to the 23S rRNA. The protein is Large ribosomal subunit protein bL9 of Haemophilus influenzae (strain PittEE).